The following is a 1849-amino-acid chain: Brefeldin A-inhibited guanine nucleotide-exchange protein 1 (1849 aa).

The interval 2 to 224 (YEGKKTKNMF…QEAKQMEKER (223 aa)) is DCB; DCB:DCB domain and DCB:HUS domain interaction. The span at 46–58 (AETEKQSPPHGEA) shows a compositional bias: basic and acidic residues. Disordered regions lie at residues 46–65 (AETEKQSPPHGEAKAGSSTL), 216–248 (EAKQMEKERHRQHHHLLQSPVSHHEPESPQLRY), 267–302 (LHTNDVDKSLQDDTEPENGSDISSAENEQTEADQAT), and 378–413 (TPISVAYTPSLPDDRLSVSSNDTQESGNSSGPSPGA). Phosphoserine is present on Ser52. The segment covering 267 to 277 (LHTNDVDKSLQ) has biased composition (basic and acidic residues). Phosphoserine occurs at positions 286, 289, 290, 397, and 410. Residues 394–409 (SVSSNDTQESGNSSGP) show a composition bias toward polar residues. The tract at residues 557-577 (ADAQSVVDIYVNYDCDLNAAN) is HUS; DCB:HUS domain interaction. The SEC7 domain occupies 709–840 (FNKKPKRGIQ…IIMLTTDLHS (132 aa)). A Nuclear localization signal (NLS) motif is present at residues 711-715 (KKPKR). Ser1079 is modified (phosphoserine). Positions 1543–1562 (RPNSGETAPPPPSPVSEKPL) are disordered. 2 positions are modified to phosphoserine: Ser1566 and Ser1569.

In terms of assembly, homodimer. Interacts with ARFGEF2/BIG2; both proteins are probably part of the same or very similar macromolecular complexes. Interacts with FKBP2. Interacts with MYO9B. Interacts with PRKAR1A and PRKAR2A. Interacts with PPP1CC. Interacts with NCL, FBL, NUP62 and U3 small nucleolar RNA. Interacts with DPY30. Interacts with PDE3A. Interacts with KANK1. Interacts with TBC1D22A and TBC1D22B. Interacts (via N-terminus) with ARL1. Post-translationally, phosphorylated. In vitro phosphorylated by PKA reducing its GEF activity and dephosphorylated by phosphatase PP1. As to expression, expressed in placenta, lung, heart, brain, kidney and pancreas.

The protein localises to the cytoplasm. The protein resides in the perinuclear region. It localises to the golgi apparatus. Its subcellular location is the trans-Golgi network membrane. It is found in the nucleus. The protein localises to the nucleolus. The protein resides in the nucleus matrix. Its activity is regulated as follows. Inhibited by brefeldin A. In terms of biological role, promotes guanine-nucleotide exchange on ARF1 and ARF3. Promotes the activation of ARF1/ARF3 through replacement of GDP with GTP. Involved in vesicular trafficking. Required for the maintenance of Golgi structure; the function may be independent of its GEF activity. Required for the maturation of integrin beta-1 in the Golgi. Involved in the establishment and persistence of cell polarity during directed cell movement in wound healing. Proposed to act as A kinase-anchoring protein (AKAP) and may mediate crosstalk between Arf and PKA pathways. Inhibits GAP activity of MYO9B probably through competitive RhoA binding. The function in the nucleus remains to be determined. The polypeptide is Brefeldin A-inhibited guanine nucleotide-exchange protein 1 (ARFGEF1) (Homo sapiens (Human)).